The following is a 366-amino-acid chain: CRS2-associated factor 2, mitochondrial (366 aa).

The N-terminal 14 residues, 1–14, are a transit peptide targeting the mitochondrion; it reads MLLPRDLLLLPWRR. The interval 24–82 is disordered; the sequence is RRLNHHRAPPFSDPDDDPPFTRLAERPPRAPSKKKKKEEEDQGGRIRPPEPASSDLPFD. The span at 60–71 shows a compositional bias: basic and acidic residues; sequence KEEEDQGGRIRP. 2 consecutive CRM domains span residues 143-241 and 263-359; these read EPLA…QRPQ and DGLT…SVSL.

In terms of assembly, part of large ribonucleo-protein complexes that include group IIB introns.

It is found in the mitochondrion. In terms of biological role, may be involved in the splicing of group IIB introns in mitochondria. This Oryza sativa subsp. japonica (Rice) protein is CRS2-associated factor 2, mitochondrial.